Consider the following 263-residue polypeptide: Probable septum site-determining protein MinC (263 aa).

Residues 107–159 form a disordered region; that stretch reads LPPSGARERPLDIKDSAPRKPAEEPSPSAGEARPEPAKAEEKPADPVSRPTKV. 2 stretches are compositionally biased toward basic and acidic residues: residues 112-129 and 138-150; these read ARER…KPAE and ARPE…EKPA.

The protein belongs to the MinC family. Interacts with MinD and FtsZ.

Its function is as follows. Cell division inhibitor that blocks the formation of polar Z ring septums. Rapidly oscillates between the poles of the cell to destabilize FtsZ filaments that have formed before they mature into polar Z rings. Prevents FtsZ polymerization. This Pseudomonas aeruginosa (strain UCBPP-PA14) protein is Probable septum site-determining protein MinC.